We begin with the raw amino-acid sequence, 332 residues long: 2,3-diketo-L-gulonate reductase (332 aa).

The active-site Proton donor is the histidine 44. Residues 168 to 174 (ITMVDMS), 224 to 225 (WK), and 304 to 306 (GHE) each bind NAD(+).

The protein belongs to the LDH2/MDH2 oxidoreductase family. DlgD subfamily. In terms of assembly, homodimer.

The protein localises to the cytoplasm. It catalyses the reaction 3-dehydro-L-gulonate + NAD(+) = 2,3-dioxo-L-gulonate + NADH + H(+). It carries out the reaction 3-dehydro-L-gulonate + NADP(+) = 2,3-dioxo-L-gulonate + NADPH + H(+). Its function is as follows. Catalyzes the reduction of 2,3-diketo-L-gulonate in the presence of NADH, to form 3-keto-L-gulonate. This Pasteurella multocida (strain Pm70) protein is 2,3-diketo-L-gulonate reductase.